The primary structure comprises 444 residues: Tol-Pal system protein TolB (444 aa).

Residues 1-19 (MRNIIYFILSLLFSFASYA) form the signal peptide.

It belongs to the TolB family. As to quaternary structure, the Tol-Pal system is composed of five core proteins: the inner membrane proteins TolA, TolQ and TolR, the periplasmic protein TolB and the outer membrane protein Pal. They form a network linking the inner and outer membranes and the peptidoglycan layer.

The protein localises to the periplasm. Functionally, part of the Tol-Pal system, which plays a role in outer membrane invagination during cell division and is important for maintaining outer membrane integrity. This Rickettsia massiliae (strain Mtu5) protein is Tol-Pal system protein TolB.